A 248-amino-acid chain; its full sequence is Ras-like protein family member 11B (248 aa).

Positions 29 to 246 (AGRRLVKIAV…ALSAKVRTVT (218 aa)) are small GTPase-like. Residues 40-47 (GASGVGKT), 87-91 (DTPGI), and 152-155 (NKAD) each bind GTP. The segment at 205–229 (QQPSGTPEKRRTSLIPRPKSPNMQD) is disordered.

The protein belongs to the small GTPase superfamily. Ras family.

The catalysed reaction is GTP + H2O = GDP + phosphate + H(+). This Bos taurus (Bovine) protein is Ras-like protein family member 11B.